The following is a 189-amino-acid chain: Interferon alpha-G (189 aa).

Residues 1–23 (MAPAWSLLLALLLLSCNAICSLG) form the signal peptide. Intrachain disulfides connect Cys24–Cys122 and Cys52–Cys162.

The protein belongs to the alpha/beta interferon family.

It is found in the secreted. Its function is as follows. Produced by macrophages, IFN-alpha have antiviral activities. Interferon stimulates the production of two enzymes: a protein kinase and an oligoadenylate synthetase. This chain is Interferon alpha-G (IFNAG), found in Bos taurus (Bovine).